The primary structure comprises 241 residues: Endothelial protein C receptor (241 aa).

A signal peptide spans 1–20; it reads MLTKFLSLLLLLLLLGCAFC. Topologically, residues 21-213 are extracellular; the sequence is NSDGSQSLHM…GSQTGRSYTS (193 aa). N47, N64, N139, N165, and N175 each carry an N-linked (GlcNAc...) asparagine glycan. Residues 214–234 form a helical membrane-spanning segment; that stretch reads LVLGILMGCFIIAGVAVGIFL. Over 235-241 the chain is Cytoplasmic; it reads CTGGRRC.

It is found in the membrane. Functionally, binds activated protein C. Enhances protein C activation by the thrombin-thrombomodulin complex; plays a role in the protein C pathway controlling blood coagulation. The protein is Endothelial protein C receptor (Procr) of Rattus norvegicus (Rat).